Here is a 245-residue protein sequence, read N- to C-terminus: Gas vesicle protein F (245 aa).

This sequence belongs to the gas vesicle GvpF/GvpL family. As to quaternary structure, binds GvpA.

The protein resides in the gas vesicle. In terms of biological role, a minor component of the gas vesicle, may be involved in preventing GvpA aggregation during gas vesicle nucleation. Gas vesicles (GV) are hollow, gas filled proteinaceous nanostructures. During planktonic growth they allow positioning of the organism at a favorable depth for light or nutrient acquisition. This is Gas vesicle protein F from Dolichospermum flosaquae (Anabaena flos-aquae).